A 218-amino-acid chain; its full sequence is NAD(P)H-quinone oxidoreductase subunit U, chloroplastic (218 aa).

A chloroplast-targeting transit peptide spans 1–53 (MASLSTITQPSLVHIPGESVLHHVPSTCSFPWKPTINTKRIICSPARNSSEVS). The tract at residues 47-72 (RNSSEVSAEAETEGGSSTAVDEAPKE) is disordered. The J domain maps to 95-159 (DHYGRLGIFR…EERRMYDWSL (65 aa)). A helical transmembrane segment spans residues 197-217 (ILGYFIGAWLVLGVALSVAFN).

As to quaternary structure, part of the chloroplast NDH complex, composed of a mixture of chloroplast and nucleus encoded subunits. Component of the electron donor-binding subcomplex, at least composed of NDHS, NDHT and NDHU.

It is found in the plastid. The protein localises to the chloroplast thylakoid membrane. It carries out the reaction a plastoquinone + NADH + (n+1) H(+)(in) = a plastoquinol + NAD(+) + n H(+)(out). It catalyses the reaction a plastoquinone + NADPH + (n+1) H(+)(in) = a plastoquinol + NADP(+) + n H(+)(out). Its function is as follows. NDH shuttles electrons from NAD(P)H:plastoquinone, via FMN and iron-sulfur (Fe-S) centers, to quinones in the photosynthetic chain and possibly in a chloroplast respiratory chain. The immediate electron acceptor for the enzyme in this species is believed to be plastoquinone. Couples the redox reaction to proton translocation, and thus conserves the redox energy in a proton gradient. This is NAD(P)H-quinone oxidoreductase subunit U, chloroplastic from Arabidopsis thaliana (Mouse-ear cress).